The following is a 591-amino-acid chain: V-type ATP synthase alpha chain (591 aa).

233–240 (GPFGAGKT) serves as a coordination point for ATP.

This sequence belongs to the ATPase alpha/beta chains family.

It catalyses the reaction ATP + H2O + 4 H(+)(in) = ADP + phosphate + 5 H(+)(out). Produces ATP from ADP in the presence of a proton gradient across the membrane. The V-type alpha chain is a catalytic subunit. In Streptococcus pyogenes serotype M28 (strain MGAS6180), this protein is V-type ATP synthase alpha chain.